Consider the following 67-residue polypeptide: Bowman-Birk type major trypsin inhibitor (67 aa).

5 cysteine pairs are disulfide-bonded: Cys-8–Cys-63, Cys-9–Cys-24, Cys-14–Cys-22, Cys-31–Cys-38, and Cys-35–Cys-51.

The protein belongs to the Bowman-Birk serine protease inhibitor family.

In Setaria italica (Foxtail millet), this protein is Bowman-Birk type major trypsin inhibitor.